A 156-amino-acid chain; its full sequence is Enhancer of split M1 protein (156 aa).

The N-terminal stretch at 1 to 19 is a signal peptide; the sequence is MMSQTLTLCCLALVACVYG. Kazal-like domains lie at 23–81 and 96–156; these read STND…AWCS and KLEV…EEKC. Disulfide bonds link Cys29–Cys62, Cys33–Cys55, Cys102–Cys135, Cys106–Cys128, and Cys114–Cys156.

The protein is Enhancer of split M1 protein (Kaz-m1) of Drosophila melanogaster (Fruit fly).